Here is a 1012-residue protein sequence, read N- to C-terminus: PHD finger protein 20 (1012 aa).

Tudor domains follow at residues 4–69 (HPPN…RPLE) and 83–147 (GSSE…GNAR). The segment at 142-336 (IVGNARPKET…RSSRLSTNGT (195 aa)) is disordered. Residues 147 to 245 (RPKETDHKSL…QVDKKPENDI (99 aa)) show a composition bias toward basic and acidic residues. The residue at position 159 (Ser-159) is a Phosphoserine. The a.T hook DNA-binding region spans 257–269 (KRKRGRPPSIAPT). The span at 271 to 280 (VDSNSQTLQP) shows a compositional bias: polar residues. Positions 297 to 325 (PLKRPRLDKNSSQEKSKNYSENTDKDLSR) are enriched in basic and acidic residues. A C2H2-type zinc finger spans residues 452–477 (FRCKVVDCLKFFRKAKLLHYHMKYFH). Residues 481–490 (KSLEPEESPG) show a composition bias toward basic and acidic residues. Residues 481–611 (KSLEPEESPG…KGKVKALEED (131 aa)) are disordered. Ser-488 bears the Phosphoserine mark. Polar residues predominate over residues 497-509 (RGPSASDKPSQET). A compositionally biased stretch (basic and acidic residues) spans 522-538 (TKDKEKNKEKKFKEFVR). Positions 539 to 551 (VKPKKKKKKKKKT) are enriched in basic residues. The PHD-type zinc finger occupies 654–700 (RCICEVQEENDFMIQCEECQCWQHGVCMGLLEENVPEKYTCYVCQDP). Lys-843 carries the N6-acetyllysine modification. Residues 866-912 (DAVNPLHENGDDSLSPRLGWPLDQDRSKGDSDPKPGSPKVKEYVSKK) are disordered. A phosphoserine mark is found at Ser-878 and Ser-880. Residues 888–912 (DQDRSKGDSDPKPGSPKVKEYVSKK) show a composition bias toward basic and acidic residues.

In terms of assembly, homodimer; disulfide-linked. Component of some MLL1/MLL complex, at least composed of the core components KMT2A/MLL1, ASH2L, HCFC1, WDR5 and RBBP5, as well as the facultative components BACC1, CHD8, E2F6, HSP70, INO80C, KANSL1, LAS1L, MAX, MCRS1, MGA, KAT8/MOF, PELP1, PHF20, PRP31, RING2, RUVB1/TIP49A, RUVB2/TIP49B, SENP3, TAF1, TAF4, TAF6, TAF7, TAF9 and TEX10. Component of the NSL complex at least composed of MOF/KAT8, KANSL1, KANSL2, KANSL3, MCRS1, PHF20, OGT1/OGT, WDR5 and HCFC1. Post-translationally, ubiquitinated by TRIM26; leading to proteasomal degradation. In terms of tissue distribution, expressed in heart, kidney, liver, lung, pancreas, placenta, spleen and testis. Not expressed in brain, skeletal muscle, colon, ovary, prostate, small intestine and thymus. Expressed in colon and ovary cancer cell lines while it is not expressed in the respective normal tissues.

The protein resides in the nucleus. Functionally, methyllysine-binding protein, component of the MOF histone acetyltransferase protein complex. Not required for maintaining the global histone H4 'Lys-16' acetylation (H4K16ac) levels or locus specific histone acetylation, but instead works downstream in transcriptional regulation of MOF target genes. As part of the NSL complex it may be involved in acetylation of nucleosomal histone H4 on several lysine residues. Contributes to methyllysine-dependent p53/TP53 stabilization and up-regulation after DNA damage. This Homo sapiens (Human) protein is PHD finger protein 20 (PHF20).